Here is a 130-residue protein sequence, read N- to C-terminus: Fumarate reductase subunit C (130 aa).

3 helical membrane passes run 30–50, 60–80, and 110–130; these read EGTS…VFAL, FVSF…LFAA, and IKAL…VALL.

This sequence belongs to the FrdC family. In terms of assembly, part of an enzyme complex containing four subunits: a flavoprotein (FrdA), an iron-sulfur protein (FrdB), and two hydrophobic anchor proteins (FrdC and FrdD).

The protein localises to the cell inner membrane. Two distinct, membrane-bound, FAD-containing enzymes are responsible for the catalysis of fumarate and succinate interconversion; fumarate reductase is used in anaerobic growth, and succinate dehydrogenase is used in aerobic growth. Anchors the catalytic components of the fumarate reductase complex to the cell inner membrane, binds quinones. This chain is Fumarate reductase subunit C, found in Yersinia pseudotuberculosis serotype O:1b (strain IP 31758).